A 156-amino-acid polypeptide reads, in one-letter code: Cyanate hydratase (156 aa).

Residues Arg96, Glu99, and Ser122 contribute to the active site.

It belongs to the cyanase family.

The catalysed reaction is cyanate + hydrogencarbonate + 3 H(+) = NH4(+) + 2 CO2. Functionally, catalyzes the reaction of cyanate with bicarbonate to produce ammonia and carbon dioxide. This chain is Cyanate hydratase, found in Serratia proteamaculans (strain 568).